Consider the following 239-residue polypeptide: Orotidine 5'-phosphate decarboxylase (239 aa).

Substrate-binding positions include Asp-12, Lys-34, 61–70, Thr-125, Arg-188, Gln-197, Gly-217, and Arg-218; that span reads DLKFHDIPNT. Lys-63 functions as the Proton donor in the catalytic mechanism.

The protein belongs to the OMP decarboxylase family. Type 1 subfamily. Homodimer.

The enzyme catalyses orotidine 5'-phosphate + H(+) = UMP + CO2. It functions in the pathway pyrimidine metabolism; UMP biosynthesis via de novo pathway; UMP from orotate: step 2/2. Functionally, catalyzes the decarboxylation of orotidine 5'-monophosphate (OMP) to uridine 5'-monophosphate (UMP). This is Orotidine 5'-phosphate decarboxylase from Syntrophomonas wolfei subsp. wolfei (strain DSM 2245B / Goettingen).